The following is a 438-amino-acid chain: Transmembrane protein 184C (438 aa).

7 helical membrane-spanning segments follow: residues 17–37 (LVAVIYLVSIVVAVPLCVWEL), 48–68 (AWFIAGIFLLLTIPISLWVIL), 86–106 (ILWMVPIYSLDSWIALKYPGI), 179–199 (YTVVRPFTTIVALICELLGIY), 212–232 (YLVIINNMSQLFAMYCLLLFY), 254–274 (VVFVSFWQAVVIALLVKVGVI), and 287–307 (AVATGLQDFIICIEMFLAAIA). Residues 358–438 (PRKKLFPEDQ…KEPSDKSVDS (81 aa)) form a disordered region. Composition is skewed to low complexity over residues 374–390 (SLLSSSSQDAISIASSM) and 404–413 (TVTPQTTPTT). Residue Ser-422 is modified to Phosphoserine. The segment covering 425-438 (IGEKKEPSDKSVDS) has biased composition (basic and acidic residues).

This sequence belongs to the TMEM184 family.

The protein resides in the membrane. In terms of biological role, possible tumor suppressor which may play a role in cell growth. The polypeptide is Transmembrane protein 184C (TMEM184C) (Pongo abelii (Sumatran orangutan)).